Consider the following 285-residue polypeptide: Putative phosphatase MG125 (285 aa).

D8 (nucleophile) is an active-site residue. D8 is a binding site for Mg(2+). Residue L9 participates in phosphate binding. Residue D10 coordinates Mg(2+). Phosphate-binding positions include T44–G45 and K205. Residues D228 and S229 each coordinate Mg(2+). N231 contacts phosphate.

Belongs to the HAD-like hydrolase superfamily. Cof family. Mg(2+) is required as a cofactor.

This chain is Putative phosphatase MG125, found in Mycoplasma genitalium (strain ATCC 33530 / DSM 19775 / NCTC 10195 / G37) (Mycoplasmoides genitalium).